Reading from the N-terminus, the 622-residue chain is Microtubule-associated protein 70-1 (622 aa).

Residues 1 to 27 (MSDVSADGGFLSAEQATTPVAIPTPYP) form a disordered region. A coiled-coil region spans residues 66-365 (DPVKVELNRL…LAISDRAAKS (300 aa)). The required for targeting to microtubules stretch occupies residues 250–483 (ILDRMHRQKV…YSFNKACDET (234 aa)). 2 disordered regions span residues 388-512 (SSIS…TEDN) and 579-622 (AAMR…RSTQ). Composition is skewed to polar residues over residues 400-425 (SMSN…SNGF) and 432-453 (MRNS…TSKS). Basic and acidic residues-rich tracts occupy residues 479–501 (ACDE…EKPP) and 579–591 (AAMR…DNRA). Residues 541–590 (DKDDAIEMLAKKVETLTKAMEVEAKKMRREVAAMEKEVAAMRVDKDQDNR) are a coiled coil. Residues 594 to 605 (SSNTKPSSNTAQ) show a composition bias toward polar residues.

This sequence belongs to the MAP70 family. As to quaternary structure, interacts with MAP70.5 and itself.

The protein resides in the cytoplasm. It is found in the cytoskeleton. Its subcellular location is the phragmoplast. The protein localises to the spindle. In terms of biological role, plant-specific protein that interact with microtubules. In association with MAP70.5, is essential for the normal banding pattern of secondary cell wall and for the proper development of xylem tracheary elements and wood formation. In Arabidopsis thaliana (Mouse-ear cress), this protein is Microtubule-associated protein 70-1 (MAP70.1).